The following is a 126-amino-acid chain: Glycine cleavage system H protein (126 aa).

The 82-residue stretch at 24–105 (TLTVGITDHA…AYGVWLFKIK (82 aa)) folds into the Lipoyl-binding domain. Position 65 is an N6-lipoyllysine (K65).

It belongs to the GcvH family. In terms of assembly, the glycine cleavage system is composed of four proteins: P, T, L and H. (R)-lipoate is required as a cofactor.

In terms of biological role, the glycine cleavage system catalyzes the degradation of glycine. The H protein shuttles the methylamine group of glycine from the P protein to the T protein. The protein is Glycine cleavage system H protein of Burkholderia cenocepacia (strain ATCC BAA-245 / DSM 16553 / LMG 16656 / NCTC 13227 / J2315 / CF5610) (Burkholderia cepacia (strain J2315)).